We begin with the raw amino-acid sequence, 287 residues long: Proline iminopeptidase (287 aa).

The AB hydrolase-1 domain maps to 22-271 (PLVLLHGGPG…RSRHMAFIDE (250 aa)). The active-site Nucleophile is the serine 98. Residue aspartate 238 is part of the active site. Histidine 265 (proton donor) is an active-site residue.

This sequence belongs to the peptidase S33 family.

It localises to the cell envelope. The catalysed reaction is Release of N-terminal proline from a peptide.. Its function is as follows. Releases the N-terminal proline from various substrates. This chain is Proline iminopeptidase, found in Lactiplantibacillus plantarum (strain ATCC BAA-793 / NCIMB 8826 / WCFS1) (Lactobacillus plantarum).